The chain runs to 268 residues: Phosphatidylglycerol--prolipoprotein diacylglyceryl transferase (268 aa).

7 consecutive transmembrane segments (helical) span residues 27–47 (PALR…MWLL), 66–86 (LLFY…VLFY), 104–124 (GGMS…YIAW), 130–150 (FFAV…AGRI), 181–201 (PSQL…LYWF), 208–228 (VGAV…IVET), and 242–262 (FMTM…YLIL). Residue arginine 149 participates in a 1,2-diacyl-sn-glycero-3-phospho-(1'-sn-glycerol) binding.

It belongs to the Lgt family.

It is found in the cell inner membrane. It catalyses the reaction L-cysteinyl-[prolipoprotein] + a 1,2-diacyl-sn-glycero-3-phospho-(1'-sn-glycerol) = an S-1,2-diacyl-sn-glyceryl-L-cysteinyl-[prolipoprotein] + sn-glycerol 1-phosphate + H(+). It functions in the pathway protein modification; lipoprotein biosynthesis (diacylglyceryl transfer). In terms of biological role, catalyzes the transfer of the diacylglyceryl group from phosphatidylglycerol to the sulfhydryl group of the N-terminal cysteine of a prolipoprotein, the first step in the formation of mature lipoproteins. In Shewanella sp. (strain MR-4), this protein is Phosphatidylglycerol--prolipoprotein diacylglyceryl transferase.